The sequence spans 333 residues: tRNA N6-adenosine threonylcarbamoyltransferase (333 aa).

H111 and H115 together coordinate Fe cation. Residues 134 to 138 (VVSGG), D167, G180, D184, and N269 contribute to the substrate site. D297 is a binding site for Fe cation.

The protein belongs to the KAE1 / TsaD family. Fe(2+) is required as a cofactor.

The protein localises to the cytoplasm. It carries out the reaction L-threonylcarbamoyladenylate + adenosine(37) in tRNA = N(6)-L-threonylcarbamoyladenosine(37) in tRNA + AMP + H(+). Functionally, required for the formation of a threonylcarbamoyl group on adenosine at position 37 (t(6)A37) in tRNAs that read codons beginning with adenine. Is involved in the transfer of the threonylcarbamoyl moiety of threonylcarbamoyl-AMP (TC-AMP) to the N6 group of A37, together with TsaE and TsaB. TsaD likely plays a direct catalytic role in this reaction. In Carboxydothermus hydrogenoformans (strain ATCC BAA-161 / DSM 6008 / Z-2901), this protein is tRNA N6-adenosine threonylcarbamoyltransferase.